Here is a 580-residue protein sequence, read N- to C-terminus: tRNA-guanine(15) transglycosylase (580 aa).

Aspartate 91 functions as the Nucleophile in the catalytic mechanism. Residues aspartate 126 and alanine 192 each contribute to the substrate site. Zn(2+)-binding residues include cysteine 275, cysteine 277, and cysteine 280. In terms of domain architecture, PUA spans arginine 504–glutamate 579.

Belongs to the archaeosine tRNA-ribosyltransferase family. The cofactor is Zn(2+).

The catalysed reaction is guanosine(15) in tRNA + 7-cyano-7-deazaguanine = 7-cyano-7-carbaguanosine(15) in tRNA + guanine. It functions in the pathway tRNA modification; archaeosine-tRNA biosynthesis. Exchanges the guanine residue with 7-cyano-7-deazaguanine (preQ0) at position 15 in the dihydrouridine loop (D-loop) of archaeal tRNAs. This is tRNA-guanine(15) transglycosylase from Thermococcus kodakarensis (strain ATCC BAA-918 / JCM 12380 / KOD1) (Pyrococcus kodakaraensis (strain KOD1)).